The following is a 24-amino-acid chain: Positive regulator of RepFIC repA1 expression (24 aa).

The protein is Positive regulator of RepFIC repA1 expression (repL) of Escherichia coli.